The chain runs to 225 residues: UPF0700 transmembrane protein YoaK (225 aa).

6 consecutive transmembrane segments (helical) span residues 10 to 30 (LLSL…LSLG), 56 to 76 (VFNS…ATLM), 99 to 119 (ILFV…HILI), 137 to 157 (GIAG…LEDI), 174 to 194 (TVLR…VALA), and 197 to 217 (DFYH…MMTA).

It belongs to the UPF0700 family.

The protein resides in the cell membrane. This chain is UPF0700 transmembrane protein YoaK (yoaK), found in Bacillus subtilis (strain 168).